A 177-amino-acid chain; its full sequence is Crossover junction endodeoxyribonuclease RuvC (177 aa).

Active-site residues include Asp7, Glu68, and Asp141. The Mg(2+) site is built by Asp7, Glu68, and Asp141.

Belongs to the RuvC family. In terms of assembly, homodimer which binds Holliday junction (HJ) DNA. The HJ becomes 2-fold symmetrical on binding to RuvC with unstacked arms; it has a different conformation from HJ DNA in complex with RuvA. In the full resolvosome a probable DNA-RuvA(4)-RuvB(12)-RuvC(2) complex forms which resolves the HJ. The cofactor is Mg(2+).

The protein resides in the cytoplasm. It catalyses the reaction Endonucleolytic cleavage at a junction such as a reciprocal single-stranded crossover between two homologous DNA duplexes (Holliday junction).. In terms of biological role, the RuvA-RuvB-RuvC complex processes Holliday junction (HJ) DNA during genetic recombination and DNA repair. Endonuclease that resolves HJ intermediates. Cleaves cruciform DNA by making single-stranded nicks across the HJ at symmetrical positions within the homologous arms, yielding a 5'-phosphate and a 3'-hydroxyl group; requires a central core of homology in the junction. The consensus cleavage sequence is 5'-(A/T)TT(C/G)-3'. Cleavage occurs on the 3'-side of the TT dinucleotide at the point of strand exchange. HJ branch migration catalyzed by RuvA-RuvB allows RuvC to scan DNA until it finds its consensus sequence, where it cleaves and resolves the cruciform DNA. In Nocardioides sp. (strain ATCC BAA-499 / JS614), this protein is Crossover junction endodeoxyribonuclease RuvC.